A 616-amino-acid polypeptide reads, in one-letter code: Dihydroxy-acid dehydratase (616 aa).

Residue aspartate 81 participates in Mg(2+) binding. Residue cysteine 122 participates in [2Fe-2S] cluster binding. 2 residues coordinate Mg(2+): aspartate 123 and lysine 124. Lysine 124 carries the post-translational modification N6-carboxylysine. [2Fe-2S] cluster is bound at residue cysteine 195. Glutamate 491 provides a ligand contact to Mg(2+). The Proton acceptor role is filled by serine 517.

Belongs to the IlvD/Edd family. Homodimer. Requires [2Fe-2S] cluster as cofactor. It depends on Mg(2+) as a cofactor.

It carries out the reaction (2R)-2,3-dihydroxy-3-methylbutanoate = 3-methyl-2-oxobutanoate + H2O. The catalysed reaction is (2R,3R)-2,3-dihydroxy-3-methylpentanoate = (S)-3-methyl-2-oxopentanoate + H2O. It functions in the pathway amino-acid biosynthesis; L-isoleucine biosynthesis; L-isoleucine from 2-oxobutanoate: step 3/4. It participates in amino-acid biosynthesis; L-valine biosynthesis; L-valine from pyruvate: step 3/4. Functionally, functions in the biosynthesis of branched-chain amino acids. Catalyzes the dehydration of (2R,3R)-2,3-dihydroxy-3-methylpentanoate (2,3-dihydroxy-3-methylvalerate) into 2-oxo-3-methylpentanoate (2-oxo-3-methylvalerate) and of (2R)-2,3-dihydroxy-3-methylbutanoate (2,3-dihydroxyisovalerate) into 2-oxo-3-methylbutanoate (2-oxoisovalerate), the penultimate precursor to L-isoleucine and L-valine, respectively. This chain is Dihydroxy-acid dehydratase, found in Salmonella paratyphi C (strain RKS4594).